A 278-amino-acid chain; its full sequence is S-formylglutathione hydrolase YeiG (278 aa).

Residues Ser-145, Asp-223, and His-256 each act as charge relay system in the active site.

The protein belongs to the esterase D family.

The enzyme catalyses S-formylglutathione + H2O = formate + glutathione + H(+). Its function is as follows. Serine hydrolase involved in the detoxification of formaldehyde. Hydrolyzes S-formylglutathione to glutathione and formate. This is S-formylglutathione hydrolase YeiG (yeiG) from Shigella flexneri serotype 5b (strain 8401).